The chain runs to 102 residues: Complement inhibitor RaCI6 (102 aa).

The first 24 residues, Met1 to Ser24, serve as a signal peptide directing secretion. 2 cysteine pairs are disulfide-bonded: Cys37/Cys61 and Cys42/Cys63.

Belongs to the RaCI family. Expressed in salivary glands.

The protein resides in the secreted. Complement inhibitor. Prevents complement-mediated C5 activation by binding to C5. Binds C5 at a different binding site than the other tick complement inhibitors OmCI and CirpT1, and the drug eculizumab. This chain is Complement inhibitor RaCI6, found in Dermacentor andersoni (Rocky mountain wood tick).